Consider the following 394-residue polypeptide: p-hydroxybenzoate hydroxylase (394 aa).

Residues serine 13, glutamate 32, 42–47 (RIRAGV), and glutamine 102 each bind FAD. Substrate contacts are provided by residues tyrosine 201, 212 to 214 (SQR), and tyrosine 222. Aspartate 286 is an FAD binding site. A substrate-binding site is contributed by proline 293. Position 299 to 300 (299 to 300 (LN)) interacts with FAD.

This sequence belongs to the aromatic-ring hydroxylase family. In terms of assembly, homodimer. It depends on FAD as a cofactor.

It carries out the reaction 4-hydroxybenzoate + NADPH + O2 + H(+) = 3,4-dihydroxybenzoate + NADP(+) + H2O. It functions in the pathway aromatic compound metabolism; benzoate degradation via hydroxylation; 3,4-dihydroxybenzoate from benzoate: step 2/2. In terms of biological role, catalyzes the incorporation of an atom of dioxygen into p-hydroxybenzoate (p-OHB) to form 3,4-dihydroxybenzoate (3,4DOHB). The reaction occurs in two parts: reduction of the flavin adenine dinucleotide (FAD) in the enzyme by reduced nicotinamide adenine dinucleotide phosphate (NADPH) in response to binding p-hydroxybenzoate to the enzyme and oxidation of reduced FAD with oxygen to form a hydroperoxide, which then oxygenates p-hydroxybenzoate. The protein is p-hydroxybenzoate hydroxylase of Pseudomonas aeruginosa (strain ATCC 15692 / DSM 22644 / CIP 104116 / JCM 14847 / LMG 12228 / 1C / PRS 101 / PAO1).